We begin with the raw amino-acid sequence, 1723 residues long: MRKLLLLIAASLLGVGLYAQSAKIKLDAPTTRTTCTNNSFKQFDASFSFNEVELTKVETKGGTFASVSIPGAFPTGEVGSPEVPAVRKLIAVPVGATPVVRVKSFTEQVYSLNQYGSEKLMPHQPSMSKSDDPEKVPFVYNAAAYARKGFVGQELTQVEMLGTMRGVRIAALTINPVQYDVVANQLKVRNNIEIEVSFQGADEVATQRLYDASFSPYFETAYKQLFNRDVYTDHGDLYNTPVRMLVVAGAKFKEALKPWLTWKAQKGFYLDVHYTDEAEVGTTNASIKAFIHKKYNDGLAASAAPVFLALVGDTDVISGEKGKKTKKVTDLYYSAVDGDYFPEMYTFRMSASSPEELTNIIDKVLMYEKATMPDKSYLEKALLIAGADSYWNPKIGQQTIKYAVQYYYNQDHGYTDVYSYPKAPYTGCYSHLNTGVGFANYTAHGSETSWADPSLTATQVKALTNKDKYFLAIGNCCVTAQFDYPQPCFGEVMTRVKEKGAYAYIGSSPNSYWGEDYYWSVGANAVFGVQPTFEGTSMGSYDATFLEDSYNTVNSIMWAGNLAATHAGNIGNITHIGAHYYWEAYHVLGDGSVMPYRAMPKTNTYTLPASLPQNQASYSIQASAGSYVAISKDGVLYGTGVANASGVATVNMTKQITENGNYDVVITRSNYLPVIKQIQAGEPSPYQPVSNLTATTQGQKVTLKWDAPSAKKAEASREVKRIGDGLFVTIEPANDVRANEAKVVLAADNVWGDNTGYQFLLDADHNTFGSVIPATGPLFTGTASSNLYSANFEYLIPANADPVVTTQNIIVTGQGEVVIPGGVYDYCITNPEPASGKMWIAGDGGNQPARYDDFTFEAGKKYTFTMRRAGMGDGTDMEVEDDSPASYTYTVYRDGTKIQEGLTATTFEEDGVAAGNHEYCVEVKYTAGVSPKVCKDVTVEGSNEFAPVQNLTGSAVGQKVTLKWDAPNGTPNPNPNPNPGTTTLSESFENGIPASWKTIDADGDGHGWKPGNAPGIAGYNSNGCVYSESFGLGGIGVLTPDNYLITPALDLPNGGKLTFWVCAQDANYASEHYAVYASSTGNDASNFTNALLEETITAKGVRSPEAIRGRIQGTWRQKTVDLPAGTKYVAFRHFQSTDMFYIDLDEVEIKANGKRADFTETFESSTHGEAPAEWTTIDADGDGQDWLCLSSGQLDWLTAHGGTNVVASFSWNGMALNPDNYLISKDVTGATKVKYYYAVNDGFPGDHYAVMISKTGTNAGDFTVVFEETPNGINKGGARFGLSTEANGAKPQSVWIERTVDLPAGTKYVAFRHYNCSDLNYILLDDIQFTMGGSPTPTDYTYTVYRDGTKIKEGLTETTFEEDGVATGNHEYCVEVKYTAGVSPKVCVNVTINPTQFNPVKNLKAQPDGGDVVLKWEAPSGKRGELLNEDFEGDAIPTGWTALDADGDGNNWDITLNEFTRGERHVLSPLRASNVAISYSSLLQGQEYLPLTPNNFLITPKVEGAKKITYKVGSPGLPQWSHDHYALCISKSGTAAADFEVIFEETMTYTQGGANLTREKDLPAGTKYVAFRHYNCTDVLGIMIDDVVITGEGEGPSYTYTVYRDGTKIQEGLTETTYRDAGMSAQSHEYCVEVKYAAGVSPKVCVDYIPDGVADVTAQKPYTLTVVGKTITVTCQGEAMIYDMNGRRLAAGRNTVVYTAQGGYYAVMVVVDGKSYVEKLAIK.

Residues M1 to I24 form the signal peptide. Residues K25–R228 constitute a propeptide that is removed on maturation. Ca(2+) contacts are provided by D313, D337, D339, F341, and E343. Catalysis depends on H444, which acts as the Proton donor. C477 acts as the Nucleophile in catalysis. Residues F482 and E491 each coordinate Ca(2+). The tract at residues W964 to S985 is disordered. Residues S987, E989, D1000, D1002, D1004, H1006, S1021, G1023, N1042, D1145, E1146, D1430, E1432, D1444, D1446, D1448, N1450, S1480, N1495, and D1585 each contribute to the Ca(2+) site.

It belongs to the peptidase C25 family. Proteolytically cleaved into a catalytic subunit and three adhesins. Arg-gingipain is involved in this post-translational processing.

It is found in the secreted. It catalyses the reaction Endopeptidase with strict specificity for lysyl bonds.. Activated by the thiol-reducing agents cysteine, 2-mercaptoethanol and dithiothreitol. Inhibited by iodacetamide, iodoacetic acid, leupeptin, tosyl-L-lysine and tosyl-L-phenylalanine. Not inhibited by elastatinal, chymostatin, cystatins, alpha1-antichymotrypsin or the serine protease inhibitors phenylmethylsulfonyl fluoride and diisopropylfluorophosphate. Not inhibited by metal ion chelators. Inhibited by the heavy metal ions Fe(3+), Zn(2+), Cu(2+) and Mn(2+). Functionally, cysteine proteinase with a strong preference for substrates with Lys in the P1 position. Hydrolyzes bovine hemoglobin, bovine serum albumin, casein, human placental type I collagen and human IgA and IgG. Disrupts the functions of polymorphonuclear leukocytes. May act as a virulence factor in the development of peridontal disease. Involved in the coaggregation of P.gingivalis with other oral bacteria. In Porphyromonas gingivalis (strain ATCC 33277 / DSM 20709 / CIP 103683 / JCM 12257 / NCTC 11834 / 2561), this protein is Lys-gingipain.